A 135-amino-acid polypeptide reads, in one-letter code: Cytochrome c oxidase subunit 2 (135 aa).

Cu cation is bound by residues histidine 81, cysteine 116, cysteine 120, and histidine 124.

The protein belongs to the cytochrome c oxidase subunit 2 family.

It is found in the cell membrane. It carries out the reaction 4 Fe(II)-[cytochrome c] + O2 + 8 H(+)(in) = 4 Fe(III)-[cytochrome c] + 2 H2O + 4 H(+)(out). Subunits I and II form the functional core of the enzyme complex. Electrons originating in cytochrome c are transferred via heme a and Cu(A) to the binuclear center formed by heme a3 and Cu(B). In Thermus thermophilus, this protein is Cytochrome c oxidase subunit 2 (cbaB).